A 596-amino-acid chain; its full sequence is Elongation factor 4 (596 aa).

In terms of domain architecture, tr-type G spans 2–184 (KHIRNFSIIA…EIVAKIPPPV (183 aa)). GTP is bound by residues 14-19 (DHGKST) and 131-134 (NKID).

It belongs to the TRAFAC class translation factor GTPase superfamily. Classic translation factor GTPase family. LepA subfamily.

It is found in the cell inner membrane. The catalysed reaction is GTP + H2O = GDP + phosphate + H(+). Required for accurate and efficient protein synthesis under certain stress conditions. May act as a fidelity factor of the translation reaction, by catalyzing a one-codon backward translocation of tRNAs on improperly translocated ribosomes. Back-translocation proceeds from a post-translocation (POST) complex to a pre-translocation (PRE) complex, thus giving elongation factor G a second chance to translocate the tRNAs correctly. Binds to ribosomes in a GTP-dependent manner. This chain is Elongation factor 4, found in Shewanella denitrificans (strain OS217 / ATCC BAA-1090 / DSM 15013).